The following is a 101-amino-acid chain: Large ribosomal subunit protein uL24 (101 aa).

Belongs to the universal ribosomal protein uL24 family. As to quaternary structure, part of the 50S ribosomal subunit.

Functionally, one of two assembly initiator proteins, it binds directly to the 5'-end of the 23S rRNA, where it nucleates assembly of the 50S subunit. One of the proteins that surrounds the polypeptide exit tunnel on the outside of the subunit. The chain is Large ribosomal subunit protein uL24 from Streptococcus suis (strain 98HAH33).